A 505-amino-acid chain; its full sequence is tRNA (guanine(6)-N(2))-methyltransferase THUMP3 (505 aa).

A disordered region spans residues 145–182 (KAKRRKANQSAGKEKADCGQGDKADEKDGKKKHASSTS). Residues 156-173 (GKEKADCGQGDKADEKDG) are compositionally biased toward basic and acidic residues. Residues 171 to 287 (KDGKKKHASS…DNEVIVAIAL (117 aa)) enclose the THUMP domain.

This sequence belongs to the methyltransferase superfamily. In terms of assembly, part of the heterodimeric THUMPD3-TRM112 methyltransferase complex; this complex forms an active tRNA methyltransferase, where TRMT112 acts as an activator of the catalytic subunit THUMPD3. In terms of tissue distribution, ubiquitously expressed. Abundantly expressed in the testis, also expressed in the brain, heart, kidney, liver, lung, muscle and spleen.

Its subcellular location is the cytoplasm. It catalyses the reaction guanosine(6) in tRNA + S-adenosyl-L-methionine = N(2)-methylguanosine(6) in tRNA + S-adenosyl-L-homocysteine + H(+). The enzyme catalyses guanosine(7) in tRNA + S-adenosyl-L-methionine = N(2)-methylguanosine(7) in tRNA + S-adenosyl-L-homocysteine + H(+). Functionally, catalytic subunit of the THUMPD3-TRM112 methyltransferase complex, that specifically mediates the S-adenosyl-L-methionine-dependent N(2)-methylation of guanosine nucleotide at position 6 (m2G6) in tRNAs. This is one of the major tRNA (guanine-N(2))-methyltransferases. Also catalyzes the S-adenosyl-L-methionine-dependent N(2)-methylation of guanosine nucleotide at position 7 of tRNA(Trp). The protein is tRNA (guanine(6)-N(2))-methyltransferase THUMP3 of Mus musculus (Mouse).